The chain runs to 111 residues: uncharacterized protein (111 aa).

The protein resides in the cytoplasm. Its subcellular location is the nucleus. This is an uncharacterized protein from Schizosaccharomyces pombe (strain 972 / ATCC 24843) (Fission yeast).